The following is a 279-amino-acid chain: Protein gustavus (279 aa).

In terms of domain architecture, B30.2/SPRY spans 36–233 (PARIDILLDM…ITMRYIGGLD (198 aa)). The SOCS box domain maps to 234–279 (PEPLPLMDLCRRTIRQKIGRTNLEEHIQQLQLPLSMKTYLLYKNRR). The segment at 236-279 (PLPLMDLCRRTIRQKIGRTNLEEHIQQLQLPLSMKTYLLYKNRR) is involved in binding to the Elongin BC complex.

The protein belongs to the SPSB family. Interacts (via B30.2/SPRY domain) with vas; this interaction may be necessary for the transport of vas to the posterior pole of the oocyte. Interacts with Cul-5. May associate with the Elongin BC complex composed of Elongin-B and Elongin-C. Expressed in ovaries, primarily in nurse cells and oocytes (at protein level).

It is found in the cytoplasm. It localises to the nucleus. Its function is as follows. Involved in the localization of vas to the posterior pole of the oocyte. Required maternally in the germ line for efficient primordial germ cell formation. The chain is Protein gustavus (gus) from Drosophila melanogaster (Fruit fly).